The sequence spans 3587 residues: Surfactin synthase subunit 1 (3587 aa).

3 Carrier domains span residues 971-1046, 2010-2085, and 3038-3112; these read APRN…DHRE, APRN…ASAE, and APTT…ERAE. O-(pantetheine 4'-phosphoryl)serine is present on residues Ser-1006, Ser-2045, and Ser-3073.

It belongs to the ATP-dependent AMP-binding enzyme family. Requires pantetheine 4'-phosphate as cofactor.

It functions in the pathway antibiotic biosynthesis; surfactin biosynthesis. Functionally, this protein is a multifunctional enzyme able to activate and polymerize the amino acids Leu, Glu, Asp and Val. Activation sites for these AA consist of individual domains. This chain is Surfactin synthase subunit 1 (srfAA), found in Bacillus subtilis (strain 168).